Consider the following 184-residue polypeptide: Large ribosomal subunit protein uL5c (184 aa).

It belongs to the universal ribosomal protein uL5 family. In terms of assembly, part of the 50S ribosomal subunit; contacts the 5S rRNA.

It localises to the plastid. The protein resides in the chloroplast. In terms of biological role, binds 5S rRNA, forms part of the central protuberance of the 50S subunit. This chain is Large ribosomal subunit protein uL5c (rpl5), found in Nephroselmis olivacea (Green alga).